We begin with the raw amino-acid sequence, 299 residues long: N-acetylmuramic acid 6-phosphate etherase (299 aa).

An SIS domain is found at 55–218 (CINCLEKNGR…STTVMVKMGK (164 aa)). Glu-83 (proton donor) is an active-site residue. Residue Glu-114 is part of the active site.

It belongs to the GCKR-like family. MurNAc-6-P etherase subfamily. As to quaternary structure, homodimer.

The catalysed reaction is N-acetyl-D-muramate 6-phosphate + H2O = N-acetyl-D-glucosamine 6-phosphate + (R)-lactate. Its pathway is amino-sugar metabolism; N-acetylmuramate degradation. In terms of biological role, specifically catalyzes the cleavage of the D-lactyl ether substituent of MurNAc 6-phosphate, producing GlcNAc 6-phosphate and D-lactate. The protein is N-acetylmuramic acid 6-phosphate etherase of Pseudothermotoga lettingae (strain ATCC BAA-301 / DSM 14385 / NBRC 107922 / TMO) (Thermotoga lettingae).